Reading from the N-terminus, the 316-residue chain is Geminin coiled-coil domain-containing protein 1 (316 aa).

The stretch at Gln-82–Ala-117 forms a coiled coil. Polar residues-rich tracts occupy residues Gly-134–Gly-155 and Met-207–Thr-234. 2 disordered regions span residues Gly-134–Arg-160 and Met-207–Pro-269. Phosphothreonine; by cdk2 is present on Thr-153. Low complexity predominate over residues Ser-235–Glu-252. The segment covering Thr-253 to Tyr-262 has biased composition (polar residues).

It belongs to the GEMC1 family. Interacts with topbp1. Interacts with Cdc45l and the kinase cdk2-cyclin-E (the interaction is direct). In terms of processing, highly phosphorylated by cdk2; stimulates initiation of DNA replication. Expressed in most tissues. Enriched in proliferating cells from skin and gut.

The protein resides in the nucleus. Its function is as follows. Regulator of DNA replication. Promotes initiation of chromosomal DNA replication by mediating topbp1- and cdk2-dependent recruitment of cdc45l onto replication origins. The protein is Geminin coiled-coil domain-containing protein 1 (gmnc) of Xenopus laevis (African clawed frog).